The sequence spans 116 residues: Flagellar transcriptional regulator FlhD (116 aa).

It belongs to the FlhD family. Homodimer; disulfide-linked. Forms a heterohexamer composed of two FlhC and four FlhD subunits. Each FlhC binds a FlhD dimer, forming a heterotrimer, and a hexamer assembles by dimerization of two heterotrimers.

It localises to the cytoplasm. Functions in complex with FlhC as a master transcriptional regulator that regulates transcription of several flagellar and non-flagellar operons by binding to their promoter region. Activates expression of class 2 flagellar genes, including fliA, which is a flagellum-specific sigma factor that turns on the class 3 genes. Also regulates genes whose products function in a variety of physiological pathways. This chain is Flagellar transcriptional regulator FlhD, found in Proteus mirabilis (strain HI4320).